A 732-amino-acid chain; its full sequence is Polyadenylate-binding protein, cytoplasmic and nuclear (732 aa).

The segment covering 1-19 has biased composition (polar residues); sequence MSAETSTTPAPAENTNGTP. Residues 1-26 are disordered; the sequence is MSAETSTTPAPAENTNGTPDNAPAPE. 4 RRM domains span residues 42-120, 130-207, 223-300, and 326-454; these read ASLY…WSQR, GNVF…HHIS, TNIY…RAQK, and VNLY…LAQR. Disordered stretches follow at residues 357–413 and 706–732; these read VMRD…KKPL and MKNKSDEPAAEKPKEAAQEAPAEENKA. Residues 371-412 are compositionally biased toward basic and acidic residues; it reads SETKESANKENEKAAEGEKEPAAEEKEKEEKKEAEQKPEKKP. Residues 630–707 form the PABC domain; it reads VGVLTAQALS…ALSVYDEYMK (78 aa).

The protein belongs to the polyadenylate-binding protein type-1 family.

Its subcellular location is the cytoplasm. It localises to the nucleus. In terms of biological role, binds the poly(A) tail of mRNA. Appears to be an important mediator of the multiple roles of the poly(A) tail in mRNA biogenesis, stability and translation. In the nucleus, involved in both mRNA cleavage and polyadenylation. Is also required for efficient mRNA export to the cytoplasm. Acts in concert with a poly(A)-specific nuclease (PAN) to affect poly(A) tail shortening, which may occur concomitantly with either nucleocytoplasmic mRNA transport or translational initiation. In the cytoplasm, stimulates translation initiation and regulates mRNA decay through translation termination-coupled poly(A) shortening, probably mediated by PAN. This is Polyadenylate-binding protein, cytoplasmic and nuclear (pab1) from Emericella nidulans (strain FGSC A4 / ATCC 38163 / CBS 112.46 / NRRL 194 / M139) (Aspergillus nidulans).